The sequence spans 325 residues: tRNA uridine(34) hydroxylase (325 aa).

The Rhodanese domain occupies 122 to 218 (EENRCLVLDV…YGQAMGTGKW (97 aa)). The active-site Cysteine persulfide intermediate is C178.

It belongs to the TrhO family.

The enzyme catalyses uridine(34) in tRNA + AH2 + O2 = 5-hydroxyuridine(34) in tRNA + A + H2O. In terms of biological role, catalyzes oxygen-dependent 5-hydroxyuridine (ho5U) modification at position 34 in tRNAs. In Chlamydia felis (strain Fe/C-56) (Chlamydophila felis), this protein is tRNA uridine(34) hydroxylase.